The following is a 506-amino-acid chain: Bone morphogenetic protein 6 (506 aa).

Residues M1–S20 form the signal peptide. Residues C21–R367 constitute a propeptide that is removed on maturation. 3 disordered regions span residues A44 to L64, P87 to S125, and K139 to S195. Low complexity predominate over residues L96–Q112. Over residues D140 to E153 the composition is skewed to acidic residues. 5 N-linked (GlcNAc...) asparagine glycosylation sites follow: N234, N262, N379, N397, and N447. The interval T366–N397 is disordered. Polar residues predominate over residues D386 to N397. Cystine bridges form between C405–C471, C434–C503, and C438–C505.

The protein belongs to the TGF-beta family. In terms of assembly, interacts with SOSTDC1. Interacts (when glycosylated) with type I receptor ACVR1; the interaction may induce HAMP expression. Interacts with type II receptor ACVR2B. Interacts with Hemojuvelin/HJV. Interacts with ERFE; the interaction inhibits BMP-induced transcription of HAMP. Interacts with BMPR1A/ALK3. Forms heterodimers with BMP2 in vitro; the heterodimer then binds to its receptor BMPR1A /ALK3 and may induce HAMP expression.

It is found in the secreted. In terms of biological role, growth factor of the TGF-beta superfamily that plays essential roles in many developmental processes including cartilage and bone formation. Also plays an important role in the regulation of HAMP/hepcidin expression and iron metabolism by acting as a ligand for hemojuvelin/HJV. Also acts to promote expression of HAMP, potentially via the interaction with its receptor BMPR1A/ALK3. Initiates the canonical BMP signaling cascade by associating with type I receptor ACVR1 and type II receptor ACVR2B. In turn, ACVR1 propagates signal by phosphorylating SMAD1/5/8 that travel to the nucleus and act as activators and repressors of transcription of target. Can also signal through non-canonical pathway such as TAZ-Hippo signaling cascade to modulate VEGF signaling by regulating VEGFR2 expression. This is Bone morphogenetic protein 6 (Bmp6) from Rattus norvegicus (Rat).